Here is a 367-residue protein sequence, read N- to C-terminus: Lipoyl synthase 2, chloroplastic (367 aa).

Residues cysteine 84, cysteine 89, cysteine 95, cysteine 121, cysteine 125, cysteine 128, and serine 336 each coordinate [4Fe-4S] cluster. Residues 104–325 (GEGDGIATAT…KEYGESVGFR (222 aa)) form the Radical SAM core domain.

Belongs to the radical SAM superfamily. Lipoyl synthase family. It depends on [4Fe-4S] cluster as a cofactor.

The protein localises to the plastid. It localises to the chloroplast. The catalysed reaction is [[Fe-S] cluster scaffold protein carrying a second [4Fe-4S](2+) cluster] + N(6)-octanoyl-L-lysyl-[protein] + 2 oxidized [2Fe-2S]-[ferredoxin] + 2 S-adenosyl-L-methionine + 4 H(+) = [[Fe-S] cluster scaffold protein] + N(6)-[(R)-dihydrolipoyl]-L-lysyl-[protein] + 4 Fe(3+) + 2 hydrogen sulfide + 2 5'-deoxyadenosine + 2 L-methionine + 2 reduced [2Fe-2S]-[ferredoxin]. It functions in the pathway protein modification; protein lipoylation via endogenous pathway; protein N(6)-(lipoyl)lysine from octanoyl-[acyl-carrier-protein]: step 2/2. In terms of biological role, catalyzes the radical-mediated insertion of two sulfur atoms into the C-6 and C-8 positions of the octanoyl moiety bound to the lipoyl domains of lipoate-dependent enzymes, thereby converting the octanoylated domains into lipoylated derivatives. This is Lipoyl synthase 2, chloroplastic from Zea mays (Maize).